A 406-amino-acid chain; its full sequence is Enoyl-[acyl-carrier-protein] reductase [NADH] (406 aa).

NAD(+)-binding positions include 48–53 (GASTGF), 74–75 (FE), 111–112 (DA), and 140–141 (IA). Substrate is bound at residue Tyr-226. Residue Tyr-236 is the Proton donor of the active site. Residues Lys-245 and 275–277 (LVT) contribute to the NAD(+) site.

Belongs to the TER reductase family. Monomer.

The catalysed reaction is a 2,3-saturated acyl-[ACP] + NAD(+) = a (2E)-enoyl-[ACP] + NADH + H(+). It functions in the pathway lipid metabolism; fatty acid biosynthesis. Functionally, involved in the final reduction of the elongation cycle of fatty acid synthesis (FAS II). Catalyzes the reduction of a carbon-carbon double bond in an enoyl moiety that is covalently linked to an acyl carrier protein (ACP). This chain is Enoyl-[acyl-carrier-protein] reductase [NADH], found in Coxiella burnetii (strain RSA 331 / Henzerling II).